We begin with the raw amino-acid sequence, 274 residues long: Ribosomal RNA small subunit methyltransferase A (274 aa).

Residues His15, Leu17, Gly42, Glu64, Asp89, and Asn108 each contribute to the S-adenosyl-L-methionine site.

Belongs to the class I-like SAM-binding methyltransferase superfamily. rRNA adenine N(6)-methyltransferase family. RsmA subfamily.

Its subcellular location is the cytoplasm. The catalysed reaction is adenosine(1518)/adenosine(1519) in 16S rRNA + 4 S-adenosyl-L-methionine = N(6)-dimethyladenosine(1518)/N(6)-dimethyladenosine(1519) in 16S rRNA + 4 S-adenosyl-L-homocysteine + 4 H(+). Its function is as follows. Specifically dimethylates two adjacent adenosines (A1518 and A1519) in the loop of a conserved hairpin near the 3'-end of 16S rRNA in the 30S particle. May play a critical role in biogenesis of 30S subunits. The sequence is that of Ribosomal RNA small subunit methyltransferase A from Prochlorococcus marinus (strain MIT 9215).